The sequence spans 355 residues: DNA polymerase IV (355 aa).

The 182-residue stretch at 7-188 (IIHIDMDCFY…LPVRKLFGVG (182 aa)) folds into the UmuC domain. The Mg(2+) site is built by Asp11 and Asp106. Residue Glu107 is part of the active site.

This sequence belongs to the DNA polymerase type-Y family. Monomer. Mg(2+) serves as cofactor.

The protein resides in the cytoplasm. It carries out the reaction DNA(n) + a 2'-deoxyribonucleoside 5'-triphosphate = DNA(n+1) + diphosphate. In terms of biological role, poorly processive, error-prone DNA polymerase involved in untargeted mutagenesis. Copies undamaged DNA at stalled replication forks, which arise in vivo from mismatched or misaligned primer ends. These misaligned primers can be extended by PolIV. Exhibits no 3'-5' exonuclease (proofreading) activity. May be involved in translesional synthesis, in conjunction with the beta clamp from PolIII. The chain is DNA polymerase IV from Legionella pneumophila (strain Lens).